The following is a 550-amino-acid chain: Mitochondrial distribution and morphology protein 12 (550 aa).

In terms of domain architecture, SMP-LTD spans 1 to 550 (MSIDLNWETV…VYPSYWTFLV (550 aa)). Disordered stretches follow at residues 76–97 (SDLASESGSEEDEEEIADDRRR), 196–386 (GHGH…KLRE), and 466–489 (ENEVDGGEGDKQTGFKSPPGGGNG). Residues 83–92 (GSEEDEEEIA) show a composition bias toward acidic residues. Pro residues predominate over residues 270–286 (PPFPPSSTGGPSPPPGL). A compositionally biased stretch (basic residues) spans 288-305 (KPHHPHHPHHHHAHHAHP). A compositionally biased stretch (basic and acidic residues) spans 327–344 (PTRDKTTPSHHPDPEDVH). The segment covering 346-355 (PNTTTTNKQR) has biased composition (polar residues). A compositionally biased stretch (low complexity) spans 356-371 (STSPATSSPLATSAQE).

The protein belongs to the MDM12 family. Component of the ER-mitochondria encounter structure (ERMES) or MDM complex, composed of MMM1, MDM10, MDM12 and MDM34. An MMM1 homodimer associates with one molecule of MDM12 on each side in a pairwise head-to-tail manner, and the SMP-LTD domains of MMM1 and MDM12 generate a continuous hydrophobic tunnel for phospholipid trafficking.

Its subcellular location is the mitochondrion outer membrane. It localises to the endoplasmic reticulum membrane. Component of the ERMES/MDM complex, which serves as a molecular tether to connect the endoplasmic reticulum (ER) and mitochondria. Components of this complex are involved in the control of mitochondrial shape and protein biogenesis, and function in nonvesicular lipid trafficking between the ER and mitochondria. MDM12 is required for the interaction of the ER-resident membrane protein MMM1 and the outer mitochondrial membrane-resident beta-barrel protein MDM10. The MDM12-MMM1 subcomplex functions in the major beta-barrel assembly pathway that is responsible for biogenesis of all mitochondrial outer membrane beta-barrel proteins, and acts in a late step after the SAM complex. The MDM10-MDM12-MMM1 subcomplex further acts in the TOM40-specific pathway after the action of the MDM12-MMM1 complex. Essential for establishing and maintaining the structure of mitochondria and maintenance of mtDNA nucleoids. This is Mitochondrial distribution and morphology protein 12 from Podospora anserina (strain S / ATCC MYA-4624 / DSM 980 / FGSC 10383) (Pleurage anserina).